The chain runs to 835 residues: Replication origin-binding protein (835 aa).

Residues 54 to 215 (PGMSQTRPVT…SGLRGDENIH (162 aa)) enclose the Helicase ATP-binding domain. 67-74 (APMGSGKT) contributes to the ATP binding site.

The protein belongs to the herpesviridae OriBP family. In terms of assembly, homodimer. Interacts with the major DNA-binding protein. Interacts with the helicase/primase component 52 and the polymerase accessory protein.

The protein localises to the host nucleus. Functionally, functions as a docking protein to recruit essential components of the viral replication machinery to viral DNA origins. In the presence of the major DNA-binding protein, opens dsDNA leading to a conformational change in the origin that facilitates DNA unwinding and subsequent replication. The chain is Replication origin-binding protein from Homo sapiens (Human).